The following is a 327-amino-acid chain: Spermidine/putrescine import ATP-binding protein PotA (327 aa).

The ABC transporter domain maps to 5 to 235 (IKVEAVEKHF…PKTLFVATFI (231 aa)). Residue 37 to 44 (GPSGCGKT) participates in ATP binding.

The protein belongs to the ABC transporter superfamily. Spermidine/putrescine importer (TC 3.A.1.11.1) family. The complex is composed of two ATP-binding proteins (PotA), two transmembrane proteins (PotB and PotC) and a solute-binding protein (PotD).

The protein localises to the cell membrane. It catalyses the reaction ATP + H2O + polyamine-[polyamine-binding protein]Side 1 = ADP + phosphate + polyamineSide 2 + [polyamine-binding protein]Side 1.. Functionally, part of the ABC transporter complex PotABCD involved in spermidine/putrescine import. Responsible for energy coupling to the transport system. This chain is Spermidine/putrescine import ATP-binding protein PotA, found in Bacillus thuringiensis subsp. konkukian (strain 97-27).